Reading from the N-terminus, the 65-residue chain is Large ribosomal subunit protein eL24 (65 aa).

Residues Cys6, Cys9, Cys32, and Cys36 each coordinate Zn(2+). The segment at Cys6 to Cys36 adopts a C4-type zinc-finger fold.

This sequence belongs to the eukaryotic ribosomal protein eL24 family. In terms of assembly, part of the 50S ribosomal subunit. Forms a cluster with proteins L3 and L14. The cofactor is Zn(2+).

Binds to the 23S rRNA. The sequence is that of Large ribosomal subunit protein eL24 from Pyrobaculum arsenaticum (strain DSM 13514 / JCM 11321 / PZ6).